Here is a 233-residue protein sequence, read N- to C-terminus: MGQKVHPNGIRLGIVKPWNSTWFANTKEFADNLDSDFKVRQYLTKELAKASVSRIVIERPAKSIRVTIHTARPGIVIGKKGEDVEKLRKVVADIAGVPAQINIAEVRKPELDAKLVADSITSQLERRVMFRRAMKRAVQNAMRLGAKGIKVEVSGRLGGAEIARTEWYREGRVPLHTLRADIDYNTSEAHTTYGVIGVKVWIFKGEILGGMAAVEQPEKPAAQPKKQQRKGRK.

The KH type-2 domain maps to 39–107; it reads VRQYLTKELA…PAQINIAEVR (69 aa).

Belongs to the universal ribosomal protein uS3 family. In terms of assembly, part of the 30S ribosomal subunit. Forms a tight complex with proteins S10 and S14.

In terms of biological role, binds the lower part of the 30S subunit head. Binds mRNA in the 70S ribosome, positioning it for translation. The chain is Small ribosomal subunit protein uS3 from Citrobacter koseri (strain ATCC BAA-895 / CDC 4225-83 / SGSC4696).